Here is a 300-residue protein sequence, read N- to C-terminus: tRNA pseudouridine synthase B (300 aa).

The Nucleophile role is filled by Asp38.

This sequence belongs to the pseudouridine synthase TruB family. Type 1 subfamily.

It carries out the reaction uridine(55) in tRNA = pseudouridine(55) in tRNA. Its function is as follows. Responsible for synthesis of pseudouridine from uracil-55 in the psi GC loop of transfer RNAs. In Dehalococcoides mccartyi (strain CBDB1), this protein is tRNA pseudouridine synthase B.